We begin with the raw amino-acid sequence, 361 residues long: D-alanine--D-alanine ligase (361 aa).

Positions 134-344 constitute an ATP-grasp domain; that stretch reads KLLLKSFNIP…FKDLIDNLID (211 aa). An ATP-binding site is contributed by 167 to 222; it reads KEVLGYPVIVKPAVLGSSIGINVAYSENQIESCIEEALKYDLTIVIEKFIEAREIE. 3 residues coordinate Mg(2+): Asp-297, Glu-311, and Asn-313.

It belongs to the D-alanine--D-alanine ligase family. Requires Mg(2+) as cofactor. Mn(2+) is required as a cofactor.

The protein localises to the cytoplasm. The catalysed reaction is 2 D-alanine + ATP = D-alanyl-D-alanine + ADP + phosphate + H(+). It functions in the pathway cell wall biogenesis; peptidoglycan biosynthesis. In terms of biological role, cell wall formation. This Borreliella afzelii (strain PKo) (Borrelia afzelii) protein is D-alanine--D-alanine ligase.